The following is a 177-amino-acid chain: Large ribosomal subunit protein uL6 (177 aa).

It belongs to the universal ribosomal protein uL6 family. As to quaternary structure, part of the 50S ribosomal subunit.

This protein binds to the 23S rRNA, and is important in its secondary structure. It is located near the subunit interface in the base of the L7/L12 stalk, and near the tRNA binding site of the peptidyltransferase center. This is Large ribosomal subunit protein uL6 from Sphingopyxis alaskensis (strain DSM 13593 / LMG 18877 / RB2256) (Sphingomonas alaskensis).